The chain runs to 222 residues: U-scoloptoxin(11)-Sm5a (222 aa).

The protein belongs to the scoloptoxin-11 family. In terms of processing, contains 8 disulfide bonds. As to expression, expressed by the venom gland.

Its subcellular location is the secreted. The sequence is that of U-scoloptoxin(11)-Sm5a from Scolopendra morsitans (Tanzanian blue ringleg centipede).